A 152-amino-acid chain; its full sequence is Catabolic 3-dehydroquinase 1 (152 aa).

Tyr24 (proton acceptor) is an active-site residue. Substrate contacts are provided by Asn75, His81, and Asp88. The active-site Proton donor is the His101. Substrate contacts are provided by residues 102-103 (VS) and Arg112.

This sequence belongs to the type-II 3-dehydroquinase family. Homododecamer. Adopts a ring-like structure, composed of an arrangement of two hexameric rings stacked on top of one another.

It catalyses the reaction 3-dehydroquinate = 3-dehydroshikimate + H2O. The protein operates within aromatic compound metabolism; 3,4-dihydroxybenzoate biosynthesis; 3,4-dihydroxybenzoate from 3-dehydroquinate: step 1/2. Functionally, is involved in the catabolism of quinate. Allows the utilization of quinate as carbon source via the beta-ketoadipate pathway. The sequence is that of Catabolic 3-dehydroquinase 1 from Aspergillus terreus (strain NIH 2624 / FGSC A1156).